The primary structure comprises 111 residues: Probable 4-amino-4-deoxy-L-arabinose-phosphoundecaprenol flippase subunit ArnE (111 aa).

A run of 3 helical transmembrane segments spans residues 38–58 (LWLGLALICMGAAMVLWLLVL), 61–81 (LPVGIAYPMLSLNFVWVTLAA), and 91–111 (PRHWLGVALIISGIIILGSAA). The EamA domain occupies 40 to 109 (LGLALICMGA…IISGIIILGS (70 aa)).

This sequence belongs to the ArnE family. Heterodimer of ArnE and ArnF.

It localises to the cell inner membrane. It functions in the pathway bacterial outer membrane biogenesis; lipopolysaccharide biosynthesis. In terms of biological role, translocates 4-amino-4-deoxy-L-arabinose-phosphoundecaprenol (alpha-L-Ara4N-phosphoundecaprenol) from the cytoplasmic to the periplasmic side of the inner membrane. This is Probable 4-amino-4-deoxy-L-arabinose-phosphoundecaprenol flippase subunit ArnE from Salmonella newport (strain SL254).